The following is a 125-amino-acid chain: Large ribosomal subunit protein bL12 (125 aa).

Belongs to the bacterial ribosomal protein bL12 family. In terms of assembly, homodimer. Part of the ribosomal stalk of the 50S ribosomal subunit. Forms a multimeric L10(L12)X complex, where L10 forms an elongated spine to which 2 to 4 L12 dimers bind in a sequential fashion. Binds GTP-bound translation factors.

Forms part of the ribosomal stalk which helps the ribosome interact with GTP-bound translation factors. Is thus essential for accurate translation. The chain is Large ribosomal subunit protein bL12 from Methylobacterium radiotolerans (strain ATCC 27329 / DSM 1819 / JCM 2831 / NBRC 15690 / NCIMB 10815 / 0-1).